Reading from the N-terminus, the 1088-residue chain is DNA damage-binding protein 1a (1088 aa).

The protein belongs to the DDB1 family. Component of the CDD complex, at least composed of COP10, DET1 and DDB1A. Component of the CUL4-RBX1-CDD complex. Component of the CUL4-RBX1-DDB1-PRL1 E3 ubiquitin-protein ligase complex. Component of the UV-DDB complex, which is composed of DDB1A and DDB2. Interacts with RAE1. Interacts with WDR55. Interacts with ATCSA-1. Interacts with DDA1. Binds to ASG2; the subcellular localization of this complex depends on ASG2 farnesylation status. Binds to KTN80.2/DWA3. Interacts with HTD1. Interacts directly with DHU1.

It localises to the cytoplasm. It is found in the nucleus. The protein operates within protein modification; protein ubiquitination. Component of light signal transduction machinery. Involved in repression of photomorphogenesis in darkness by participating in the CDD complex, a complex probably required to regulate the activity of ubiquitin conjugating enzymes (E2s). Repression of photomorphogenesis is probably mediated by ubiquitination and subsequent degradation of photomorphogenesis-promoting factors such as HY5, HYH and LAF1. Plays a role in DNA repair by forming with DDB2 the UV-damaged DNA-binding protein complex (UV-DDB). Component of the CUL4-RBX1-DDB1-PRL1 E3 ubiquitin-protein ligase complex. This chain is DNA damage-binding protein 1a, found in Arabidopsis thaliana (Mouse-ear cress).